The sequence spans 327 residues: GTPase Obg (327 aa).

The Obg domain maps to 1-159 (MKFVDSARIV…LKVDLELKLM (159 aa)). The disordered stretch occupies residues 120-145 (GGDGGRGNPHFTTSTRQAPRYAEPGG). The region spanning 160 to 323 (ADVGLVGFPN…LRNALWNTIN (164 aa)) is the OBG-type G domain. GTP contacts are provided by residues 166–173 (GFPNAGKS), 191–195 (FTTLV), 213–216 (DIPG), 280–283 (TKMD), and 304–306 (SSI). Mg(2+) is bound by residues S173 and T193.

It belongs to the TRAFAC class OBG-HflX-like GTPase superfamily. OBG GTPase family. As to quaternary structure, monomer. Mg(2+) serves as cofactor.

Its subcellular location is the cytoplasm. In terms of biological role, an essential GTPase which binds GTP, GDP and possibly (p)ppGpp with moderate affinity, with high nucleotide exchange rates and a fairly low GTP hydrolysis rate. Plays a role in control of the cell cycle, stress response, ribosome biogenesis and in those bacteria that undergo differentiation, in morphogenesis control. The chain is GTPase Obg from Prosthecochloris aestuarii (strain DSM 271 / SK 413).